Consider the following 324-residue polypeptide: Tetrahydromethanopterin:alpha-L-glutamate ligase (324 aa).

In terms of domain architecture, ATP-grasp spans 113–321 (SYLLARAGLP…PAEYILEYLQ (209 aa)). ATP contacts are provided by residues Lys148, 195-204 (QEFIENPGRD), and Arg220. Asp265 contributes to the Mg(2+) binding site. Residue Asp265 participates in Mn(2+) binding. Residues 274–293 (TGNENKKTEDKSTGQGSRIL) form a disordered region. 2 residues coordinate Mg(2+): Glu294 and Asn296. Positions 294 and 296 each coordinate Mn(2+).

This sequence belongs to the RimK family. MptN subfamily. In terms of assembly, homodimer. The cofactor is Mg(2+). It depends on Mn(2+) as a cofactor.

The enzyme catalyses 5,6,7,8-tetrahydromethanopterin + L-glutamate + ATP = 5,6,7,8-tetrahydrosarcinapterin + ADP + phosphate + H(+). It functions in the pathway cofactor biosynthesis; 5,6,7,8-tetrahydrosarcinapterin biosynthesis. Catalyzes the ATP or GTP-dependent addition of one L-glutamate molecule to tetrahydromethanopterin, producing tetrahydrosarcinapterin. The polypeptide is Tetrahydromethanopterin:alpha-L-glutamate ligase (mptN) (Methanosarcina acetivorans (strain ATCC 35395 / DSM 2834 / JCM 12185 / C2A)).